The following is a 504-amino-acid chain: Maturase K (504 aa).

Belongs to the intron maturase 2 family. MatK subfamily.

The protein localises to the plastid. The protein resides in the chloroplast. Functionally, usually encoded in the trnK tRNA gene intron. Probably assists in splicing its own and other chloroplast group II introns. The chain is Maturase K from Gossypium gossypioides (Mexican cotton).